Consider the following 290-residue polypeptide: Xylanase inhibitor protein 2 (290 aa).

A signal peptide spans 1–27 (MGLVHALLPFAAAAALLLLAAPPPATA). Positions 30 to 290 (PGLAVYWGRH…DKKANYTGEG (261 aa)) constitute a GH18 domain. A disulfide bridge connects residues C49 and C89. Residue N112 is glycosylated (N-linked (GlcNAc...) asparagine). A disulfide bridge connects residues C187 and C216. N285 carries N-linked (GlcNAc...) asparagine glycosylation.

This sequence belongs to the glycosyl hydrolase 18 family. Xylanase inhibitor subfamily. As to quaternary structure, binds to fungal GH10 xylanases.

The protein resides in the secreted. In terms of biological role, fungal xylanase inhibitor. Possesses competitive inhibiting activity against several fungal endo-1,4-beta-D-xylanases belonging to glycoside hydrolase family 10 (GH10) and family 11 (GH11). May function in plant defense against secreted fungal pathogen xylanases. Is similar to class III chitinases, but does not exhibit chitinase activity. This is Xylanase inhibitor protein 2 from Oryza sativa subsp. japonica (Rice).